The following is a 208-amino-acid chain: Small ribosomal subunit protein eS1 (208 aa).

Belongs to the eukaryotic ribosomal protein eS1 family.

The chain is Small ribosomal subunit protein eS1 from Saccharolobus islandicus (strain Y.N.15.51 / Yellowstone #2) (Sulfolobus islandicus).